A 178-amino-acid chain; its full sequence is 2-C-methyl-D-erythritol 2,4-cyclodiphosphate synthase (178 aa).

Positions 24, 26, and 61 each coordinate a divalent metal cation. A 4-CDP-2-C-methyl-D-erythritol 2-phosphate-binding site is contributed by 24–26 (DSH). Residue 150-153 (TSGE) coordinates 4-CDP-2-C-methyl-D-erythritol 2-phosphate.

Belongs to the IspF family. Homotrimer. The cofactor is a divalent metal cation.

The catalysed reaction is 4-CDP-2-C-methyl-D-erythritol 2-phosphate = 2-C-methyl-D-erythritol 2,4-cyclic diphosphate + CMP. It participates in isoprenoid biosynthesis; isopentenyl diphosphate biosynthesis via DXP pathway; isopentenyl diphosphate from 1-deoxy-D-xylulose 5-phosphate: step 4/6. Functionally, involved in the biosynthesis of isopentenyl diphosphate (IPP) and dimethylallyl diphosphate (DMAPP), two major building blocks of isoprenoid compounds. Catalyzes the conversion of 4-diphosphocytidyl-2-C-methyl-D-erythritol 2-phosphate (CDP-ME2P) to 2-C-methyl-D-erythritol 2,4-cyclodiphosphate (ME-CPP) with a corresponding release of cytidine 5-monophosphate (CMP). The sequence is that of 2-C-methyl-D-erythritol 2,4-cyclodiphosphate synthase from Chlamydia trachomatis serovar L2 (strain ATCC VR-902B / DSM 19102 / 434/Bu).